The primary structure comprises 339 residues: Adenosine deaminase (339 aa).

Zn(2+)-binding residues include histidine 15 and histidine 17. The substrate site is built by histidine 17, aspartate 19, and glycine 172. Histidine 199 is a Zn(2+) binding site. The active-site Proton donor is glutamate 202. Aspartate 279 is a binding site for Zn(2+).

This sequence belongs to the metallo-dependent hydrolases superfamily. Adenosine and AMP deaminases family. Adenosine deaminase subfamily. Requires Zn(2+) as cofactor.

It catalyses the reaction adenosine + H2O + H(+) = inosine + NH4(+). The enzyme catalyses 2'-deoxyadenosine + H2O + H(+) = 2'-deoxyinosine + NH4(+). Its function is as follows. Catalyzes the hydrolytic deamination of adenosine and 2-deoxyadenosine. This chain is Adenosine deaminase, found in Lacticaseibacillus paracasei (strain ATCC 334 / BCRC 17002 / CCUG 31169 / CIP 107868 / KCTC 3260 / NRRL B-441) (Lactobacillus paracasei).